Here is a 90-residue protein sequence, read N- to C-terminus: uncharacterized protein (90 aa).

The protein resides in the cytoplasm. This is an uncharacterized protein from Saccharomyces cerevisiae (strain ATCC 204508 / S288c) (Baker's yeast).